Consider the following 201-residue polypeptide: Cell division protein SepF (201 aa).

The span at V27–R38 shows a compositional bias: basic and acidic residues. The segment at V27–R99 is disordered. Residues Q43–S54 show a composition bias toward polar residues. Residues N72–R81 show a composition bias toward basic and acidic residues. Positions N83–V92 are enriched in polar residues.

It belongs to the SepF family. In terms of assembly, homodimer. Interacts with FtsZ.

It localises to the cytoplasm. Cell division protein that is part of the divisome complex and is recruited early to the Z-ring. Probably stimulates Z-ring formation, perhaps through the cross-linking of FtsZ protofilaments. Its function overlaps with FtsA. This Streptococcus agalactiae serotype V (strain ATCC BAA-611 / 2603 V/R) protein is Cell division protein SepF.